The chain runs to 339 residues: Retinol dehydrogenase 10-A (339 aa).

A helical; Signal-anchor transmembrane segment spans residues 3 to 23; that stretch reads IFVEFFLVMLKVCWAIVMAGF. 40–64 serves as a coordination point for NADP(+); that stretch reads VITGAGGGLGRLFAKEFARRRATLV. Residue Ser-195 coordinates substrate. The active-site Proton acceptor is Tyr-208.

The protein belongs to the short-chain dehydrogenases/reductases (SDR) family.

The protein resides in the microsome membrane. It is found in the endoplasmic reticulum membrane. It catalyses the reaction all-trans-retinol + NADP(+) = all-trans-retinal + NADPH + H(+). Its pathway is cofactor metabolism; retinol metabolism. In terms of biological role, retinol dehydrogenase with a clear preference for NADP. Converts all-trans-retinol to all-trans-retinal. Has no detectable activity towards 11-cis-retinol, 9-cis-retinol and 13-cis-retinol. This chain is Retinol dehydrogenase 10-A (rdh10a), found in Danio rerio (Zebrafish).